A 773-amino-acid polypeptide reads, in one-letter code: ATP-dependent RNA helicase MAK5 (773 aa).

Residues lysine 73 to aspartate 82 show a composition bias toward basic and acidic residues. Disordered regions lie at residues lysine 73–leucine 99 and serine 114–aspartate 144. Residues aspartate 83–leucine 99 are compositionally biased toward acidic residues. A Phosphothreonine modification is found at threonine 135. Phosphoserine is present on serine 138. The short motif at glutamate 171–lysine 199 is the Q motif element. The Helicase ATP-binding domain occupies isoleucine 202 to arginine 399. Alanine 215–threonine 222 is an ATP binding site. Positions aspartate 333–aspartate 336 match the DEAD box motif. The Helicase C-terminal domain maps to aspartate 452–asparagine 615. Serine 678 carries the phosphoserine modification.

This sequence belongs to the DEAD box helicase family. DDX24/MAK5 subfamily.

The protein resides in the nucleus. It is found in the nucleolus. The catalysed reaction is ATP + H2O = ADP + phosphate + H(+). Its function is as follows. ATP-binding RNA helicase involved in the biogenesis of 60S ribosomal subunits and is required for the normal formation of 25S and 5.8S rRNAs. Required for the maintenance of dsRNA killer plasmid. This Saccharomyces cerevisiae (strain ATCC 204508 / S288c) (Baker's yeast) protein is ATP-dependent RNA helicase MAK5 (MAK5).